The primary structure comprises 354 residues: Uroporphyrinogen decarboxylase (354 aa).

Residues 27-31 (RQAGR), D77, Y154, T209, and H327 contribute to the substrate site.

This sequence belongs to the uroporphyrinogen decarboxylase family. Homodimer.

The protein resides in the cytoplasm. The enzyme catalyses uroporphyrinogen III + 4 H(+) = coproporphyrinogen III + 4 CO2. The protein operates within porphyrin-containing compound metabolism; protoporphyrin-IX biosynthesis; coproporphyrinogen-III from 5-aminolevulinate: step 4/4. Its function is as follows. Catalyzes the decarboxylation of four acetate groups of uroporphyrinogen-III to yield coproporphyrinogen-III. The sequence is that of Uroporphyrinogen decarboxylase from Escherichia coli O81 (strain ED1a).